The primary structure comprises 337 residues: Glyceraldehyde-3-phosphate dehydrogenase 3, cytosolic (337 aa).

The interval 1 to 151 (MAKIKIGING…YKSDINIVSN (151 aa)) is binding to NAD. NAD(+)-binding positions include 13–14 (RI), D35, and R82. Residues 152–337 (ASCTTNCLAP…DLIRHMNSTK (186 aa)) are catalytic. D-glyceraldehyde 3-phosphate contacts are provided by residues 153-155 (SCT), T184, 213-214 (TG), and R236. C154 (nucleophile) is an active-site residue. Residue N318 participates in NAD(+) binding.

It belongs to the glyceraldehyde-3-phosphate dehydrogenase family. As to quaternary structure, homotetramer.

It is found in the cytoplasm. The catalysed reaction is D-glyceraldehyde 3-phosphate + phosphate + NAD(+) = (2R)-3-phospho-glyceroyl phosphate + NADH + H(+). It functions in the pathway carbohydrate degradation; glycolysis; pyruvate from D-glyceraldehyde 3-phosphate: step 1/5. Its function is as follows. Key enzyme in glycolysis that catalyzes the first step of the pathway by converting D-glyceraldehyde 3-phosphate (G3P) into 3-phospho-D-glyceroyl phosphate. Essential for the maintenance of cellular ATP levels and carbohydrate metabolism. This chain is Glyceraldehyde-3-phosphate dehydrogenase 3, cytosolic (GAPC3), found in Zea mays (Maize).